The following is a 334-amino-acid chain: Ferrochelatase (334 aa).

Fe cation contacts are provided by His-207 and Glu-288.

This sequence belongs to the ferrochelatase family.

The protein resides in the cytoplasm. It carries out the reaction heme b + 2 H(+) = protoporphyrin IX + Fe(2+). It participates in porphyrin-containing compound metabolism; protoheme biosynthesis; protoheme from protoporphyrin-IX: step 1/1. Catalyzes the ferrous insertion into protoporphyrin IX. This chain is Ferrochelatase, found in Helicobacter pylori (strain P12).